A 682-amino-acid polypeptide reads, in one-letter code: Kinesin-like protein KIF2A (682 aa).

Positions 1 to 192 are globular; it reads MVTSLNEDSE…LDYRPLTTSD (192 aa). The segment at 39-129 is disordered; that stretch reads LAPDEEIDPG…GKKDFGLASR (91 aa). Residues 99 to 115 show a composition bias toward polar residues; the sequence is IEQSASRQQNGSVSDIS. In terms of domain architecture, Kinesin motor spans 198-528; the sequence is RICVCVRKRP…LRYANRVKEL (331 aa). An ATP-binding site is contributed by 288–295; that stretch reads GQTGSGKT. A coiled-coil region spans residues 638–673; it reads QLEAILEKKIDILTELRDKVKSFRAALQEEEHASKQ.

This sequence belongs to the TRAFAC class myosin-kinesin ATPase superfamily. Kinesin family. MCAK/KIF2 subfamily. As to quaternary structure, interacts with aurka and plk1. In terms of processing, phosphorylation by plk1 promotes location at spindle microtubules and spindle poles, and enhances its microtubule depolymerization activity. Post-translationally, phosphorylation by AURKA interferes with location at spindle microtubules and spindle poles, and inhibits its microtubule depolymerization activity.

Its subcellular location is the cytoplasm. It localises to the cytoskeleton. It is found in the microtubule organizing center. The protein localises to the centrosome. The protein resides in the spindle pole. Its subcellular location is the spindle. Plus end-directed microtubule-dependent motor. May regulate microtubule dynamics during axonal growth. Required for normal progression through mitosis. Required for normal congress of chromosomes at the metaphase plate. Required for normal spindle dynamics during mitosis. Promotes spindle turnover. Implicated in formation of bipolar mitotic spindles Has microtubule depolymerization activity. This chain is Kinesin-like protein KIF2A (kif2a), found in Xenopus laevis (African clawed frog).